The following is a 156-amino-acid chain: 6,7-dimethyl-8-ribityllumazine synthase (156 aa).

Residues F22, 57–59, and 81–83 contribute to the 5-amino-6-(D-ribitylamino)uracil site; these read AVE and SVI. Residue 86-87 participates in (2S)-2-hydroxy-3-oxobutyl phosphate binding; it reads GT. H89 serves as the catalytic Proton donor. F114 serves as a coordination point for 5-amino-6-(D-ribitylamino)uracil. R128 provides a ligand contact to (2S)-2-hydroxy-3-oxobutyl phosphate.

Belongs to the DMRL synthase family. In terms of assembly, forms an icosahedral capsid composed of 60 subunits, arranged as a dodecamer of pentamers.

It carries out the reaction (2S)-2-hydroxy-3-oxobutyl phosphate + 5-amino-6-(D-ribitylamino)uracil = 6,7-dimethyl-8-(1-D-ribityl)lumazine + phosphate + 2 H2O + H(+). It functions in the pathway cofactor biosynthesis; riboflavin biosynthesis; riboflavin from 2-hydroxy-3-oxobutyl phosphate and 5-amino-6-(D-ribitylamino)uracil: step 1/2. In terms of biological role, catalyzes the formation of 6,7-dimethyl-8-ribityllumazine by condensation of 5-amino-6-(D-ribitylamino)uracil with 3,4-dihydroxy-2-butanone 4-phosphate. This is the penultimate step in the biosynthesis of riboflavin. The sequence is that of 6,7-dimethyl-8-ribityllumazine synthase from Aliivibrio fischeri (strain ATCC 700601 / ES114) (Vibrio fischeri).